The chain runs to 187 residues: Elongation factor P (187 aa).

Belongs to the elongation factor P family.

Its subcellular location is the cytoplasm. It participates in protein biosynthesis; polypeptide chain elongation. Involved in peptide bond synthesis. Stimulates efficient translation and peptide-bond synthesis on native or reconstituted 70S ribosomes in vitro. Probably functions indirectly by altering the affinity of the ribosome for aminoacyl-tRNA, thus increasing their reactivity as acceptors for peptidyl transferase. This is Elongation factor P from Chromobacterium violaceum (strain ATCC 12472 / DSM 30191 / JCM 1249 / CCUG 213 / NBRC 12614 / NCIMB 9131 / NCTC 9757 / MK).